The following is a 263-amino-acid chain: Indolethylamine N-methyltransferase (263 aa).

Residue K13 is modified to N6-succinyllysine. S-adenosyl-L-methionine-binding positions include Y20, Y25, 63–64 (GS), Y69, D85, and N90. Residue K96 is modified to N6-succinyllysine. Residues 142–143 (DV) and L163 contribute to the S-adenosyl-L-methionine site.

Belongs to the class I-like SAM-binding methyltransferase superfamily. NNMT/PNMT/TEMT family. As to quaternary structure, monomer.

It localises to the cytoplasm. The catalysed reaction is a tertiary amine + S-adenosyl-L-methionine = a methylated tertiary amine + S-adenosyl-L-homocysteine + H(+). The enzyme catalyses a secondary amine + S-adenosyl-L-methionine = a methylated secondary amine + S-adenosyl-L-homocysteine + H(+). It catalyses the reaction a primary amine + S-adenosyl-L-methionine = a methylated primary amine + S-adenosyl-L-homocysteine + H(+). It carries out the reaction dimethyl sulfide + S-adenosyl-L-methionine = trimethylsulfonium + S-adenosyl-L-homocysteine. Its function is as follows. Catalyzes the N-methylation of tryptamine and structurally related compounds. Functions as a thioether S-methyltransferase and is active with a variety of thioethers and the corresponding selenium and tellurium compounds, including 3-methylthiopropionaldehyde, dimethyl selenide, dimethyl telluride, 2-methylthioethylamine, 2-methylthioethanol, methyl-n-propyl sulfide and diethyl sulfide. Plays an important role in the detoxification of selenium compounds. This Pongo abelii (Sumatran orangutan) protein is Indolethylamine N-methyltransferase (INMT).